Consider the following 319-residue polypeptide: Cobalamin biosynthesis protein CbiB (319 aa).

5 helical membrane passes run 52–74, 79–101, 155–177, 207–229, and 296–318; these read IGGG…GVLA, IHPW…GRSL, GIIA…YKAV, YLPA…LSGW, and LMWV…LSGV.

It belongs to the CobD/CbiB family.

It is found in the cell membrane. It functions in the pathway cofactor biosynthesis; adenosylcobalamin biosynthesis; adenosylcobalamin from cob(II)yrinate a,c-diamide: step 4/7. In terms of biological role, converts cobyric acid to cobinamide by the addition of aminopropanol on the F carboxylic group. However, the true cosubstrate could be (R)-1-amino-2-propanol O-2-phosphate, leading to cobinamide phosphate. In Salmonella typhi, this protein is Cobalamin biosynthesis protein CbiB.